A 133-amino-acid chain; its full sequence is UPF0102 protein bll0669 (133 aa).

The protein belongs to the UPF0102 family.

This is UPF0102 protein bll0669 from Bradyrhizobium diazoefficiens (strain JCM 10833 / BCRC 13528 / IAM 13628 / NBRC 14792 / USDA 110).